The sequence spans 186 residues: ATP-dependent protease subunit HslV (186 aa).

Residue Thr14 is part of the active site. The Na(+) site is built by Ala168, Cys171, and Thr174.

The protein belongs to the peptidase T1B family. HslV subfamily. In terms of assembly, a double ring-shaped homohexamer of HslV is capped on each side by a ring-shaped HslU homohexamer. The assembly of the HslU/HslV complex is dependent on binding of ATP.

Its subcellular location is the cytoplasm. The enzyme catalyses ATP-dependent cleavage of peptide bonds with broad specificity.. Its activity is regulated as follows. Allosterically activated by HslU binding. Functionally, protease subunit of a proteasome-like degradation complex believed to be a general protein degrading machinery. The polypeptide is ATP-dependent protease subunit HslV (Bradyrhizobium sp. (strain ORS 278)).